A 416-amino-acid polypeptide reads, in one-letter code: Serine hydroxymethyltransferase (416 aa).

(6S)-5,6,7,8-tetrahydrofolate-binding positions include L121 and 125–127 (GHL). Residue K229 is modified to N6-(pyridoxal phosphate)lysine.

It belongs to the SHMT family. As to quaternary structure, homodimer. Requires pyridoxal 5'-phosphate as cofactor.

The protein resides in the cytoplasm. It carries out the reaction (6R)-5,10-methylene-5,6,7,8-tetrahydrofolate + glycine + H2O = (6S)-5,6,7,8-tetrahydrofolate + L-serine. It participates in one-carbon metabolism; tetrahydrofolate interconversion. It functions in the pathway amino-acid biosynthesis; glycine biosynthesis; glycine from L-serine: step 1/1. Its function is as follows. Catalyzes the reversible interconversion of serine and glycine with tetrahydrofolate (THF) serving as the one-carbon carrier. This reaction serves as the major source of one-carbon groups required for the biosynthesis of purines, thymidylate, methionine, and other important biomolecules. Also exhibits THF-independent aldolase activity toward beta-hydroxyamino acids, producing glycine and aldehydes, via a retro-aldol mechanism. The protein is Serine hydroxymethyltransferase of Neisseria meningitidis serogroup C (strain 053442).